The primary structure comprises 92 residues: Progonadoliberin-1 (92 aa).

Residues 1–23 (METIPKLMAAVVLLTVCLEGCSS) form the signal peptide. Glutamine 24 is subject to Pyrrolidone carboxylic acid. Glycine 33 is modified (glycine amide).

Belongs to the GnRH family. Post-translationally, the precursor is cleaved by ACE, which removes the Gly-Lys-Arg peptide at the C-terminus, leading to mature hormone. The mature form of Gonadoliberin-1 is also cleaved and degraded by ACE. As to expression, central nervous system.

It localises to the secreted. Functionally, stimulates the secretion of gonadotropins; it stimulates the secretion of both luteinizing and follicle-stimulating hormones. This is Progonadoliberin-1 (Gnrh1) from Rattus norvegicus (Rat).